A 523-amino-acid polypeptide reads, in one-letter code: Cyclic di-GMP binding protein BcsE (523 aa).

The protein belongs to the BcsE family.

Its function is as follows. Required for cellulose biosynthesis. May have protease activity, but BcsA is not targeted. Binds bis-(3'-5') cyclic diguanylic acid (c-di-GMP). This Salmonella typhimurium (strain LT2 / SGSC1412 / ATCC 700720) protein is Cyclic di-GMP binding protein BcsE.